The primary structure comprises 404 residues: uncharacterized protein (404 aa).

This is an uncharacterized protein from Ostreid herpesvirus 1 (isolate France) (OsHV-1).